The sequence spans 91 residues: Small ribosomal subunit protein bS16 (91 aa).

It belongs to the bacterial ribosomal protein bS16 family.

The polypeptide is Small ribosomal subunit protein bS16 (Exiguobacterium sibiricum (strain DSM 17290 / CCUG 55495 / CIP 109462 / JCM 13490 / 255-15)).